The primary structure comprises 115 residues: uncharacterized protein (115 aa).

The protein to M.tuberculosis Rv3073c.

This is an uncharacterized protein from Escherichia coli (strain K12).